We begin with the raw amino-acid sequence, 126 residues long: Prefoldin subunit beta (126 aa).

The protein belongs to the prefoldin subunit beta family. Heterohexamer of two alpha and four beta subunits.

The protein localises to the cytoplasm. Its function is as follows. Molecular chaperone capable of stabilizing a range of proteins. Seems to fulfill an ATP-independent, HSP70-like function in archaeal de novo protein folding. The chain is Prefoldin subunit beta from Methanocella arvoryzae (strain DSM 22066 / NBRC 105507 / MRE50).